Consider the following 335-residue polypeptide: UDP-N-acetylglucosamine--N-acetylmuramyl-(pentapeptide) pyrophosphoryl-undecaprenol N-acetylglucosamine transferase (335 aa).

Residues 9–11, N123, S176, and Q274 contribute to the UDP-N-acetyl-alpha-D-glucosamine site; that span reads TGG.

The protein belongs to the glycosyltransferase 28 family. MurG subfamily.

The protein resides in the cell inner membrane. It catalyses the reaction di-trans,octa-cis-undecaprenyl diphospho-N-acetyl-alpha-D-muramoyl-L-alanyl-D-glutamyl-meso-2,6-diaminopimeloyl-D-alanyl-D-alanine + UDP-N-acetyl-alpha-D-glucosamine = di-trans,octa-cis-undecaprenyl diphospho-[N-acetyl-alpha-D-glucosaminyl-(1-&gt;4)]-N-acetyl-alpha-D-muramoyl-L-alanyl-D-glutamyl-meso-2,6-diaminopimeloyl-D-alanyl-D-alanine + UDP + H(+). The protein operates within cell wall biogenesis; peptidoglycan biosynthesis. In terms of biological role, cell wall formation. Catalyzes the transfer of a GlcNAc subunit on undecaprenyl-pyrophosphoryl-MurNAc-pentapeptide (lipid intermediate I) to form undecaprenyl-pyrophosphoryl-MurNAc-(pentapeptide)GlcNAc (lipid intermediate II). The protein is UDP-N-acetylglucosamine--N-acetylmuramyl-(pentapeptide) pyrophosphoryl-undecaprenol N-acetylglucosamine transferase of Campylobacter fetus subsp. fetus (strain 82-40).